Consider the following 169-residue polypeptide: Putative 3-methyladenine DNA glycosylase (169 aa).

This sequence belongs to the DNA glycosylase MPG family.

This chain is Putative 3-methyladenine DNA glycosylase, found in Wolbachia sp. subsp. Brugia malayi (strain TRS).